Consider the following 219-residue polypeptide: 7-cyano-7-deazaguanine synthase (219 aa).

10–20 (FSGGQDSTTCL) is an ATP binding site. 4 residues coordinate Zn(2+): cysteine 188, cysteine 197, cysteine 200, and cysteine 203.

This sequence belongs to the QueC family. In terms of assembly, homodimer. It depends on Zn(2+) as a cofactor.

It catalyses the reaction 7-carboxy-7-deazaguanine + NH4(+) + ATP = 7-cyano-7-deazaguanine + ADP + phosphate + H2O + H(+). It participates in purine metabolism; 7-cyano-7-deazaguanine biosynthesis. Its function is as follows. Catalyzes the ATP-dependent conversion of 7-carboxy-7-deazaguanine (CDG) to 7-cyano-7-deazaguanine (preQ(0)). The chain is 7-cyano-7-deazaguanine synthase from Clostridium botulinum (strain 657 / Type Ba4).